The sequence spans 336 residues: Phenylalanine--tRNA ligase alpha subunit (336 aa).

Position 255 (E255) interacts with Mg(2+).

It belongs to the class-II aminoacyl-tRNA synthetase family. Phe-tRNA synthetase alpha subunit type 1 subfamily. Tetramer of two alpha and two beta subunits. Requires Mg(2+) as cofactor.

It localises to the cytoplasm. The enzyme catalyses tRNA(Phe) + L-phenylalanine + ATP = L-phenylalanyl-tRNA(Phe) + AMP + diphosphate + H(+). The chain is Phenylalanine--tRNA ligase alpha subunit from Gemmatimonas aurantiaca (strain DSM 14586 / JCM 11422 / NBRC 100505 / T-27).